The sequence spans 124 residues: Sulfiredoxin (124 aa).

Belongs to the sulfiredoxin family. In terms of assembly, interacts with tpx1 in response to oxidative stress.

It is found in the cytoplasm. The protein resides in the nucleus. The catalysed reaction is S-hydroxy-S-oxy-L-cysteinyl-[peroxiredoxin] + [protein]-dithiol + ATP = S-hydroxy-L-cysteinyl-[peroxiredoxin] + [protein]-disulfide + ADP + phosphate. In terms of biological role, contributes to oxidative stress resistance by reducing cysteine-sulfinic acid formed under exposure to oxidants in a peroxiredoxin. May catalyze the reduction in a multi-step process by acting both as a specific phosphotransferase and a thioltransferase. The sequence is that of Sulfiredoxin (srx1) from Schizosaccharomyces pombe (strain 972 / ATCC 24843) (Fission yeast).